Reading from the N-terminus, the 172-residue chain is Female-specific lacrimal gland protein (172 aa).

A signal peptide spans 1-16 (MVKFLLLALALGVSCA). 2 disulfides stabilise this stretch: Cys60–Cys64 and Cys79–Cys170.

The protein belongs to the calycin superfamily. Lipocalin family. As to expression, expressed in the lacrimal gland from where it is secreted into tears (at protein level).

The protein localises to the secreted. The polypeptide is Female-specific lacrimal gland protein (Mesocricetus auratus (Golden hamster)).